The primary structure comprises 64 residues: Large ribosomal subunit protein bL32 (64 aa).

The protein belongs to the bacterial ribosomal protein bL32 family.

This is Large ribosomal subunit protein bL32 from Flavobacterium johnsoniae (strain ATCC 17061 / DSM 2064 / JCM 8514 / BCRC 14874 / CCUG 350202 / NBRC 14942 / NCIMB 11054 / UW101) (Cytophaga johnsonae).